We begin with the raw amino-acid sequence, 171 residues long: Translation initiation factor IF-3 (171 aa).

The protein belongs to the IF-3 family. In terms of assembly, monomer.

It localises to the cytoplasm. Functionally, IF-3 binds to the 30S ribosomal subunit and shifts the equilibrium between 70S ribosomes and their 50S and 30S subunits in favor of the free subunits, thus enhancing the availability of 30S subunits on which protein synthesis initiation begins. This chain is Translation initiation factor IF-3, found in Thermus thermophilus (strain ATCC BAA-163 / DSM 7039 / HB27).